The following is a 170-amino-acid chain: VIP peptides (170 aa).

The signal sequence occupies residues 1–21 (MEARSKPQFLAFLILFSVLFS). The propeptide occupies 22–79 (QSLAWPLFGPPSVVRLDDRMPFEGAGDPDQVSLKADSDILQNPLAENGTPYYDVSRNA). S76 is subject to Phosphoserine. Residue I107 is modified to Isoleucine amide. A glycan (N-linked (GlcNAc...) asparagine) is linked at N133. The residue at position 152 (N152) is an Asparagine amide. Residues 156-170 (SSEGDSADFLEELEK) constitute a propeptide that is removed on maturation.

Belongs to the glucagon family.

It is found in the secreted. In terms of biological role, VIP is a neuropeptide involved in a diverse array of physiological processes through activating the PACAP subfamily of class B1 G protein-coupled receptors: VIP receptor 1 (VPR1) and VIP receptor 2 (VPR2). Abundantly expressed throughout the CNS and peripheral nervous systems where they primarily exert neuroprotective and immune modulatory roles. Also causes vasodilation, lowers arterial blood pressure, stimulates myocardial contractility, increases glycogenolysis and relaxes the smooth muscle of trachea, stomach and gall bladder. Its function is as follows. PHM-27 and PHV-42 are two bioactive forms from proteolysis of the same precursor protein, that cause vasodilation. PHM-27 is a potent agonist of the calcitonin receptor CALCR, with similar efficacy as calcitonin. This Mus musculus (Mouse) protein is VIP peptides (Vip).